A 398-amino-acid chain; its full sequence is tRNA pseudouridine synthase D (398 aa).

Asp76 acts as the Nucleophile in catalysis. The 211-residue stretch at 151–361 (GVPNRFGVQR…MEGERRPLRV (211 aa)) folds into the TRUD domain.

This sequence belongs to the pseudouridine synthase TruD family.

The catalysed reaction is uridine(13) in tRNA = pseudouridine(13) in tRNA. Functionally, responsible for synthesis of pseudouridine from uracil-13 in transfer RNAs. The chain is tRNA pseudouridine synthase D from Geobacter sp. (strain M21).